A 265-amino-acid polypeptide reads, in one-letter code: Putative carbamate hydrolase RutD (265 aa).

The AB hydrolase-1 domain occupies 21-123 (PILLSAGMGG…TIVNGWARAD (103 aa)).

The protein belongs to the AB hydrolase superfamily. Hydrolase RutD family.

The catalysed reaction is carbamate + 2 H(+) = NH4(+) + CO2. Its function is as follows. Involved in pyrimidine catabolism. May facilitate the hydrolysis of carbamate, a reaction that can also occur spontaneously. The sequence is that of Putative carbamate hydrolase RutD from Azorhizobium caulinodans (strain ATCC 43989 / DSM 5975 / JCM 20966 / LMG 6465 / NBRC 14845 / NCIMB 13405 / ORS 571).